Reading from the N-terminus, the 456-residue chain is Anthranilate synthase component 1 (456 aa).

Residues S31 and 244–246 (SYM) contribute to the L-tryptophan site. 279 to 280 (GT) serves as a coordination point for chorismate. Residue E306 coordinates Mg(2+). Residues Y394, R414, 428–430 (GAG), and G430 contribute to the chorismate site. A Mg(2+)-binding site is contributed by E443.

It belongs to the anthranilate synthase component I family. In terms of assembly, heterotetramer consisting of two non-identical subunits: a beta subunit (TrpG) and a large alpha subunit (TrpE). It depends on Mg(2+) as a cofactor.

It carries out the reaction chorismate + L-glutamine = anthranilate + pyruvate + L-glutamate + H(+). It participates in amino-acid biosynthesis; L-tryptophan biosynthesis; L-tryptophan from chorismate: step 1/5. With respect to regulation, feedback inhibited by tryptophan. Its function is as follows. Part of a heterotetrameric complex that catalyzes the two-step biosynthesis of anthranilate, an intermediate in the biosynthesis of L-tryptophan. In the first step, the glutamine-binding beta subunit (TrpG) of anthranilate synthase (AS) provides the glutamine amidotransferase activity which generates ammonia as a substrate that, along with chorismate, is used in the second step, catalyzed by the large alpha subunit of AS (TrpE) to produce anthranilate. In the absence of TrpG, TrpE can synthesize anthranilate directly from chorismate and high concentrations of ammonia. The polypeptide is Anthranilate synthase component 1 (trpE) (Lactococcus lactis subsp. lactis (strain IL1403) (Streptococcus lactis)).